We begin with the raw amino-acid sequence, 1307 residues long: Contactin-associated protein like 5-3 (1307 aa).

The signal sequence occupies residues 1–24 (MDFVPRLNSVLTLVLSGLWHFGLT). Residues 25–1238 (ATNCDNCDDP…PLTNAVLSDS (1214 aa)) are Extracellular-facing. The region spanning 31 to 175 (CDDPLASFLS…IGMRMEVYGC (145 aa)) is the F5/8 type C domain. An intrachain disulfide couples cysteine 31 to cysteine 175. 2 Laminin G-like domains span residues 181 to 361 (VADF…TFSC) and 368 to 545 (PITF…IDLC). Asparagine 283 is a glycosylation site (N-linked (GlcNAc...) asparagine). Cysteine 330 and cysteine 361 are oxidised to a cystine. Asparagine 497 carries an N-linked (GlcNAc...) asparagine glycan. Intrachain disulfides connect cysteine 513/cysteine 545, cysteine 551/cysteine 562, cysteine 556/cysteine 571, and cysteine 573/cysteine 583. Residues 547–584 (IKDRCLPNYCEHGGHCVQTWTTFYCNCSNTGYTGATCH) enclose the EGF-like 1 domain. A Fibrinogen C-terminal domain is found at 585–792 (DSIYEQSCEV…LRCYGDRHFW (208 aa)). Residues asparagine 600, asparagine 624, and asparagine 637 are each glycosylated (N-linked (GlcNAc...) asparagine). Residues 793-958 (NAVSFSTEAS…MVTSGVRPGC (166 aa)) form the Laminin G-like 3 domain. 5 disulfide bridges follow: cysteine 931/cysteine 958, cysteine 962/cysteine 975, cysteine 969/cysteine 984, cysteine 986/cysteine 996, and cysteine 1165/cysteine 1200. Residues 959–997 (PGHCSSYGNNCHNGGKCVEKHNSYSCDCTKSPYEGPFCQ) form the EGF-like 2 domain. Residues 1019–1200 (PVSKNTSTSS…VQGSLREFSC (182 aa)) enclose the Laminin G-like 4 domain. The helical transmembrane segment at 1239-1259 (AVIGGVIAVVTFITFCVIGIM) threads the bilayer. The Cytoplasmic portion of the chain corresponds to 1260 to 1307 (TRFLYQHKQSHCTSQKKEKEYSENLDSSFRHDIDLQSTTSKCKREYFI).

This sequence belongs to the neurexin family.

It localises to the membrane. In terms of biological role, may play a role in the correct development and proper functioning of the peripheral and central nervous system and be involved in cell adhesion and intercellular communication. The chain is Contactin-associated protein like 5-3 (Cntnap5c) from Rattus norvegicus (Rat).